We begin with the raw amino-acid sequence, 229 residues long: Ribonuclease 3 (229 aa).

Residues 3 to 125 (VNALQEKLGY…LIGGIFLDSN (123 aa)) enclose the RNase III domain. Position 38 (glutamate 38) interacts with Mg(2+). Aspartate 42 is a catalytic residue. 2 residues coordinate Mg(2+): asparagine 111 and glutamate 114. Residue glutamate 114 is part of the active site. A DRBM domain is found at 155–225 (DPKTRLQEYM…AAKVLEALEH (71 aa)).

The protein belongs to the ribonuclease III family. Homodimer. Requires Mg(2+) as cofactor.

Its subcellular location is the cytoplasm. The enzyme catalyses Endonucleolytic cleavage to 5'-phosphomonoester.. Its function is as follows. Digests double-stranded RNA. Involved in the processing of primary rRNA transcript to yield the immediate precursors to the large and small rRNAs (23S and 16S). Processes some mRNAs, and tRNAs when they are encoded in the rRNA operon. Processes pre-crRNA and tracrRNA of type II CRISPR loci if present in the organism. The polypeptide is Ribonuclease 3 (Blochmanniella pennsylvanica (strain BPEN)).